The primary structure comprises 204 residues: Holliday junction branch migration complex subunit RuvA (204 aa).

The segment at 1–64 is domain I; it reads MIGRLRGIIL…EDAQLLFGFN (64 aa). The interval 65-143 is domain II; it reads SKPERALFRE…GMHGDLFASD (79 aa). A flexible linker region spans residues 144–155; it reads APFALTSEMPKE. The tract at residues 156–204 is domain III; sequence TANDAEGEAVAALTALGYKPQEASRMIVKVGKPDADCETLIREALRAAI.

Belongs to the RuvA family. Homotetramer. Forms an RuvA(8)-RuvB(12)-Holliday junction (HJ) complex. HJ DNA is sandwiched between 2 RuvA tetramers; dsDNA enters through RuvA and exits via RuvB. An RuvB hexamer assembles on each DNA strand where it exits the tetramer. Each RuvB hexamer is contacted by two RuvA subunits (via domain III) on 2 adjacent RuvB subunits; this complex drives branch migration. In the full resolvosome a probable DNA-RuvA(4)-RuvB(12)-RuvC(2) complex forms which resolves the HJ.

It localises to the cytoplasm. The RuvA-RuvB-RuvC complex processes Holliday junction (HJ) DNA during genetic recombination and DNA repair, while the RuvA-RuvB complex plays an important role in the rescue of blocked DNA replication forks via replication fork reversal (RFR). RuvA specifically binds to HJ cruciform DNA, conferring on it an open structure. The RuvB hexamer acts as an ATP-dependent pump, pulling dsDNA into and through the RuvAB complex. HJ branch migration allows RuvC to scan DNA until it finds its consensus sequence, where it cleaves and resolves the cruciform DNA. In Erwinia tasmaniensis (strain DSM 17950 / CFBP 7177 / CIP 109463 / NCPPB 4357 / Et1/99), this protein is Holliday junction branch migration complex subunit RuvA.